Consider the following 594-residue polypeptide: Protein FAM200C (594 aa).

This is Protein FAM200C (FAM200C) from Bos taurus (Bovine).